Here is a 495-residue protein sequence, read N- to C-terminus: Neuronal acetylcholine receptor subunit beta-4 (495 aa).

Positions 1-20 (MRGTPLLLVSLFALLQPGDC) are cleaved as a signal peptide. At 21–235 (RLANAEEKLM…IIKRKPLFYT (215 aa)) the chain is on the extracellular side. N-linked (GlcNAc...) asparagine glycosylation is found at N35, N92, N137, and N165. A disulfide bond links C152 and C166. Residues 236-256 (INLIIPCVLITSLAILVFYLP) form a helical membrane-spanning segment. The Cytoplasmic portion of the chain corresponds to 257-264 (SDCGEKMT). Na(+) is bound at residue E261. A helical membrane pass occupies residues 265 to 285 (LCISVLLALTFFLLLISKIVP). The Extracellular portion of the chain corresponds to 286 to 297 (PTSLDIPLIGKY). Residues 298-318 (LLFTMVLVTFSIVTTVCVLNV) form a helical membrane-spanning segment. Residues 319 to 463 (HHRSPSTHTM…WKFVAMVVDR (145 aa)) are Cytoplasmic-facing. Residues 464 to 484 (LFLWVFVIVCILGTMGLFLPP) form a helical membrane-spanning segment. At 485–495 (LFQIHAPSKGL) the chain is on the extracellular side.

This sequence belongs to the ligand-gated ion channel (TC 1.A.9) family. Acetylcholine receptor (TC 1.A.9.1) subfamily. Beta-4/CHRNB4 sub-subfamily. Neuronal AChR is composed of two different types of subunits: alpha and beta. CHRNB4/Beta-4 subunit can be combined to CHRNA2/alpha-2, CHRNA3/alpha-3 or CHRNA4/alpha-4, CHRNA5/alpha-5 and CHRNB3/beta-3 to give rise to functional receptors. Forms stoichiometries such as (CHRNA3)2:(CHRNB4)3 or (CHRNA3:CHRNB4)2:CHRNB3. Interacts with RIC3; which is required for proper folding and assembly. Interacts with LYPD6. Predominantly expressed by immature T-cells in the thymus.

The protein localises to the synaptic cell membrane. It is found in the cell membrane. It carries out the reaction K(+)(in) = K(+)(out). The enzyme catalyses Na(+)(in) = Na(+)(out). It catalyses the reaction Ca(2+)(in) = Ca(2+)(out). Its activity is regulated as follows. Activated by a myriad of ligands such as acetylcholine, cytisine, nicotine, choline and epibatidine. The heteropentamer CHRNA3:CHRNB4 activity is blocked by the alpha-conotoxin ImI and AuIB. Functionally, component of neuronal acetylcholine receptors (nAChRs) that function as pentameric, ligand-gated cation channels with high calcium permeability among other activities. nAChRs are excitatory neurotrasnmitter receptors formed by a collection of nAChR subunits known to mediate synaptic transmission in the nervous system and the neuromuscular junction. Each nAchR subunit confers differential attributes to channel properties, including activation, deactivation and desensitization kinetics, pH sensitivity, cation permeability, and binding to allosteric modulators. CHRNB4 forms heteropentameric neuronal acetylcholine receptors with CHRNA2, CHRNA3 and CHRNA4, as well as CHRNA5 and CHRNB3 as accesory subunits. CHRNA3:CHRNB4 being predominant in neurons of the autonomic ganglia, it is known as ganglionic nicotinic receptor. CHRNA3:CHRNB4 or CHRNA3:CHRNA5:CHRNB4 play also an important role in the habenulo-interpeduncular tract, modulating the mesolimbic dopamine system and affecting reward circuits and addiction. Hypothalamic CHRNA3:CHRNB4 nAChR activation by nicotine leads to activation of POMC neurons and a decrease in food intake. In Mus musculus (Mouse), this protein is Neuronal acetylcholine receptor subunit beta-4 (Chrnb4).